The following is a 115-amino-acid chain: Tail tip protein M (115 aa).

Belongs to the lambda-like tail tip protein M family.

Its subcellular location is the virion. The protein localises to the host cytoplasm. Its function is as follows. Part of the distal tail tip which plays a role in DNA ejection during entry, and in tail assembly initiation during exit. May bind tail tip complex associated with tape measure protein and allow tail tube protein polymerization on top of tail tip. The sequence is that of Tail tip protein M from Escherichia coli (Bacteriophage N15).